Reading from the N-terminus, the 141-residue chain is Nucleoside diphosphate kinase (141 aa).

The ATP site is built by lysine 11, phenylalanine 59, arginine 87, threonine 93, arginine 104, and asparagine 114. The active-site Pros-phosphohistidine intermediate is the histidine 117.

It belongs to the NDK family. In terms of assembly, homotetramer. Mg(2+) is required as a cofactor.

The protein resides in the cytoplasm. The catalysed reaction is a 2'-deoxyribonucleoside 5'-diphosphate + ATP = a 2'-deoxyribonucleoside 5'-triphosphate + ADP. It carries out the reaction a ribonucleoside 5'-diphosphate + ATP = a ribonucleoside 5'-triphosphate + ADP. Functionally, major role in the synthesis of nucleoside triphosphates other than ATP. The ATP gamma phosphate is transferred to the NDP beta phosphate via a ping-pong mechanism, using a phosphorylated active-site intermediate. This is Nucleoside diphosphate kinase from Paraburkholderia phymatum (strain DSM 17167 / CIP 108236 / LMG 21445 / STM815) (Burkholderia phymatum).